Consider the following 863-residue polypeptide: Ribosomal protein S6 kinase alpha-5 (863 aa).

Over residues 1–21 the composition is skewed to gly residues; it reads MEGEGGGSGGAGTSGDSGDGG. The interval 1–22 is disordered; the sequence is MEGEGGGSGGAGTSGDSGDGGE. The Protein kinase 1 domain maps to 48-317; the sequence is FELLKVLGTG…AEEIKEHLFF (270 aa). Residues 54–62 and K80 contribute to the ATP site; that span reads LGTGAYGKV. Catalysis depends on D176, which acts as the Proton acceptor. At S211 the chain carries Phosphoserine; by autocatalysis. Residues 318–386 enclose the AGC-kinase C-terminal domain; the sequence is EKIKWDDLAA…VAPSILFKRN (69 aa). At S359 the chain carries Phosphoserine; by MAPK1, MAPK3 and MAPK14. S375 and S380 each carry phosphoserine; by autocatalysis. One can recognise a Protein kinase 2 domain in the interval 428 to 675; the sequence is DKPLGEGSFS…SCDLWSLGVI (248 aa). Residues 431–440 and K454 contribute to the ATP site; that span reads LGEGSFSICR. D608 acts as the Proton acceptor in catalysis. T645 bears the Phosphothreonine; by MAPK1, MAPK3 and MAPK14 mark. A phosphoserine mark is found at S711, S721, S755, and S759. T764 carries the post-translational modification Phosphothreonine. The segment at 805-863 is disordered; it reads AKRRKMKRTSTSTETRSSSSESSRSSSSQSHGKTTPTKTLQPSNPTEGSNPDTLFQFSD. Residues 813-832 are compositionally biased toward low complexity; that stretch reads TSTSTETRSSSSESSRSSSS. Phosphoserine; by autocatalysis is present on residues S814, S816, and S822. The segment covering 833 to 863 has biased composition (polar residues); it reads QSHGKTTPTKTLQPSNPTEGSNPDTLFQFSD. S862 is subject to Phosphoserine.

It belongs to the protein kinase superfamily. AGC Ser/Thr protein kinase family. S6 kinase subfamily. In terms of assembly, forms a complex with either MAPK1/ERK2 or MAPK3/ERK1 in quiescent cells which transiently dissociates following mitogenic stimulation. Also associates with MAPK14/p38-alpha. Activated RPS6KA5 associates with and phosphorylates the NF-kappa-B p65 subunit RELA. Interacts with CREBBP and EP300. Requires Mg(2+) as cofactor. In terms of processing, ser-375 and Thr-645 phosphorylation is required for kinase activity. Ser-375 and Ser-211 are autophosphorylated by the C-terminal kinase domain, and their phosphorylation is essential for the catalytic activity of the N-terminal kinase domain. Phosphorylated at Ser-359, Thr-645 and Thr-764 by MAPK1/ERK2, MAPK3/ERK1 and MAPK14/p38-alpha. Autophosphorylated at Ser-814, Ser-816 and Ser-822 by the N-terminal kinase domain. Ubiquitinated.

The protein localises to the nucleus. The catalysed reaction is L-seryl-[protein] + ATP = O-phospho-L-seryl-[protein] + ADP + H(+). It catalyses the reaction L-threonyl-[protein] + ATP = O-phospho-L-threonyl-[protein] + ADP + H(+). Its activity is regulated as follows. Activated by phosphorylation at Ser-359, Thr-645 and Thr-764 by MAPK1/ERK2, MAPK3/ERK1 and MAPK14/p38-alpha, and by further autophosphorylation of Ser-211, Ser-375 and Ser-380 by the activated C-terminal kinase domain. The active N-terminal kinase domain finally phosphorylates downstream substrates, as well as Ser-814, Ser-816 and Ser-822 in its own C-terminal region. Functionally, serine/threonine-protein kinase that is required for the mitogen or stress-induced phosphorylation of the transcription factors CREB1 and ATF1 and for the regulation of the transcription factors RELA, STAT3 and ETV1/ER81, and that contributes to gene activation by histone phosphorylation and functions in the regulation of inflammatory genes. Phosphorylates CREB1 and ATF1 in response to mitogenic or stress stimuli such as UV-C irradiation, epidermal growth factor (EGF) and anisomycin. Plays an essential role in the control of RELA transcriptional activity in response to TNF and upon glucocorticoid, associates in the cytoplasm with the glucocorticoid receptor NR3C1 and contributes to RELA inhibition and repression of inflammatory gene expression. In skeletal myoblasts is required for phosphorylation of RELA at 'Ser-276' during oxidative stress. In erythropoietin-stimulated cells, is necessary for the 'Ser-727' phosphorylation of STAT3 and regulation of its transcriptional potential. Phosphorylates ETV1/ER81 at 'Ser-191' and 'Ser-216', and thereby regulates its ability to stimulate transcription, which may be important during development and breast tumor formation. Directly represses transcription via phosphorylation of 'Ser-1' of histone H2A. Phosphorylates 'Ser-10' of histone H3 in response to mitogenics, stress stimuli and EGF, which results in the transcriptional activation of several immediate early genes, including proto-oncogenes c-fos/FOS and c-jun/JUN. May also phosphorylate 'Ser-28' of histone H3. Mediates the mitogen- and stress-induced phosphorylation of high mobility group protein 1 (HMGN1/HMG14). In lipopolysaccharide-stimulated primary macrophages, acts downstream of the Toll-like receptor TLR4 to limit the production of pro-inflammatory cytokines. Functions probably by inducing transcription of the MAP kinase phosphatase DUSP1 and the anti-inflammatory cytokine interleukin 10 (IL10), via CREB1 and ATF1 transcription factors. Plays a role in neuronal cell death by mediating the downstream effects of excitotoxic injury. Phosphorylates TRIM7 at 'Ser-106' in response to growth factor signaling via the MEK/ERK pathway, thereby stimulating its ubiquitin ligase activity. In Mus musculus (Mouse), this protein is Ribosomal protein S6 kinase alpha-5 (Rps6ka5).